The chain runs to 415 residues: Gamma-glutamyl phosphate reductase (415 aa).

This sequence belongs to the gamma-glutamyl phosphate reductase family.

The protein localises to the cytoplasm. The catalysed reaction is L-glutamate 5-semialdehyde + phosphate + NADP(+) = L-glutamyl 5-phosphate + NADPH + H(+). It functions in the pathway amino-acid biosynthesis; L-proline biosynthesis; L-glutamate 5-semialdehyde from L-glutamate: step 2/2. Functionally, catalyzes the NADPH-dependent reduction of L-glutamate 5-phosphate into L-glutamate 5-semialdehyde and phosphate. The product spontaneously undergoes cyclization to form 1-pyrroline-5-carboxylate. This chain is Gamma-glutamyl phosphate reductase, found in Listeria monocytogenes serovar 1/2a (strain ATCC BAA-679 / EGD-e).